A 286-amino-acid chain; its full sequence is ATP synthase gamma chain (286 aa).

This sequence belongs to the ATPase gamma chain family. In terms of assembly, F-type ATPases have 2 components, CF(1) - the catalytic core - and CF(0) - the membrane proton channel. CF(1) has five subunits: alpha(3), beta(3), gamma(1), delta(1), epsilon(1). CF(0) has three main subunits: a, b and c.

It localises to the cell inner membrane. Its function is as follows. Produces ATP from ADP in the presence of a proton gradient across the membrane. The gamma chain is believed to be important in regulating ATPase activity and the flow of protons through the CF(0) complex. The protein is ATP synthase gamma chain of Pseudomonas fluorescens (strain SBW25).